Reading from the N-terminus, the 429-residue chain is Citrate synthase, chromosomal (429 aa).

Active-site residues include H306 and D364.

Belongs to the citrate synthase family.

It catalyses the reaction oxaloacetate + acetyl-CoA + H2O = citrate + CoA + H(+). It participates in carbohydrate metabolism; tricarboxylic acid cycle; isocitrate from oxaloacetate: step 1/2. This chain is Citrate synthase, chromosomal (ccsA), found in Rhizobium tropici.